The chain runs to 348 residues: UDP-N-acetyl-alpha-D-glucosaminouronate 4-epimerase (348 aa).

NAD(+) contacts are provided by F26, I27, D46, T50, G51, D77, I78, Q97, Y165, K169, and V195. The active-site Proton acceptor is Y165.

This sequence belongs to the NAD(P)-dependent epimerase/dehydratase family. In terms of assembly, homodimer. NAD(+) is required as a cofactor.

The enzyme catalyses UDP-2-acetamido-2-deoxy-alpha-D-glucuronate = UDP-2-acetamido-2-deoxy-alpha-D-galacturonate. The catalysed reaction is UDP-N-acetyl-alpha-D-glucosamine = UDP-N-acetyl-alpha-D-galactosamine. The protein operates within capsule biogenesis; capsule polysaccharide biosynthesis. It participates in glycan metabolism; Vi-antigen biosynthesis. Functionally, epimerase required for the biosynthesis of the capsular polysaccharide, commonly referred as the Vi antigen, an important virulence factor. Catalyzes the reversible epimerization of UDP-N-acetylglucosaminuronic acid (UDP-GlcNAcA) to UDP-N-acetylgalactosaminuronic acid (UDP-GalNAcA). Also catalyzes, with lower efficiency, the reversible epimerization of UDP-N-acetylglucosamine (UDP-GlcNAc) to UDP-N-acetylgalactosamine (UDP-GalNAc). Cannot use UDP-glucose (UDP-Glc) and UDP-galactose (UDP-Gal) as substrates. This chain is UDP-N-acetyl-alpha-D-glucosaminouronate 4-epimerase, found in Salmonella typhi.